We begin with the raw amino-acid sequence, 400 residues long: Deoxyguanosinetriphosphate triphosphohydrolase-like protein (400 aa).

An HD domain is found at 73-215; it reads RLTHSIEVSQ…AAIADDIAYN (143 aa).

It belongs to the dGTPase family. Type 2 subfamily.

The polypeptide is Deoxyguanosinetriphosphate triphosphohydrolase-like protein (Bartonella henselae (strain ATCC 49882 / DSM 28221 / CCUG 30454 / Houston 1) (Rochalimaea henselae)).